The following is a 433-amino-acid chain: Protein disulfide-isomerase A6 homolog (433 aa).

An N-terminal signal peptide occupies residues 1–19 (MRQLASILLLAFVVGSVSA). Thioredoxin domains lie at 20-119 (FYSP…GQRT) and 120-267 (AKAI…KHVA). Residues Cys-55, Cys-58, Cys-186, and Cys-189 each act as nucleophile in the active site. 2 cysteine pairs are disulfide-bonded: Cys-55/Cys-58 and Cys-186/Cys-189. Asn-279 carries N-linked (GlcNAc...) asparagine glycosylation. Residues 405 to 433 (VDPWDGKDGQLPTEEDIDLSDIDLDKDEL) are disordered. A compositionally biased stretch (acidic residues) spans 417–433 (TEEDIDLSDIDLDKDEL). Residues 430-433 (KDEL) carry the Prevents secretion from ER motif.

This sequence belongs to the protein disulfide isomerase family. Interacts with Drpr (via extracellular region). In the blastoderm embryo, expression starts at the anterior and posterior poles and later appears as broad stripes. Following gastrulation, expressed in midline precursor cells and the posterior head with low levels present throughout the embryo. During germ band extension, weak dorsoventral stripes of expression are evident. Midline expression begins and is retained throughout embryogenesis in clusters of cells in each segment in the central nervous system. At least some of the midline expression occurs in VUM neurons.

It localises to the endoplasmic reticulum lumen. The protein localises to the cell surface. The catalysed reaction is Catalyzes the rearrangement of -S-S- bonds in proteins.. In terms of biological role, binds to both apoptotic cells and phagocytes and promotes Drpr-dependent phagocytosis of apoptotic cells. The protein is Protein disulfide-isomerase A6 homolog of Drosophila melanogaster (Fruit fly).